The following is a 227-amino-acid chain: Cytochrome c oxidase subunit 2 (227 aa).

At 1 to 26 (MATWSNLSIQDGASPLMEQLSFFHDD) the chain is on the mitochondrial intermembrane side. Residues 27–48 (HTMVVLLITVIVGYALSYMLFN) traverse the membrane as a helical segment. Topologically, residues 49–62 (AYTNRNMLHGHLIE) are mitochondrial matrix. A helical membrane pass occupies residues 63–82 (TIWTALPAITLIFIALPSLR). The Mitochondrial intermembrane segment spans residues 83-227 (LLYLLDDSVD…LFIKWLSKMI (145 aa)). His161, Cys196, Glu198, Cys200, His204, and Met207 together coordinate Cu cation. Residue Glu198 participates in Mg(2+) binding.

Belongs to the cytochrome c oxidase subunit 2 family. As to quaternary structure, component of the cytochrome c oxidase (complex IV, CIV), a multisubunit enzyme composed of a catalytic core of 3 subunits and several supernumerary subunits. The complex exists as a monomer or a dimer and forms supercomplexes (SCs) in the inner mitochondrial membrane with ubiquinol-cytochrome c oxidoreductase (cytochrome b-c1 complex, complex III, CIII). Requires Cu cation as cofactor.

It is found in the mitochondrion inner membrane. It carries out the reaction 4 Fe(II)-[cytochrome c] + O2 + 8 H(+)(in) = 4 Fe(III)-[cytochrome c] + 2 H2O + 4 H(+)(out). Its function is as follows. Component of the cytochrome c oxidase, the last enzyme in the mitochondrial electron transport chain which drives oxidative phosphorylation. The respiratory chain contains 3 multisubunit complexes succinate dehydrogenase (complex II, CII), ubiquinol-cytochrome c oxidoreductase (cytochrome b-c1 complex, complex III, CIII) and cytochrome c oxidase (complex IV, CIV), that cooperate to transfer electrons derived from NADH and succinate to molecular oxygen, creating an electrochemical gradient over the inner membrane that drives transmembrane transport and the ATP synthase. Cytochrome c oxidase is the component of the respiratory chain that catalyzes the reduction of oxygen to water. Electrons originating from reduced cytochrome c in the intermembrane space (IMS) are transferred via the dinuclear copper A center (CU(A)) of subunit 2 and heme A of subunit 1 to the active site in subunit 1, a binuclear center (BNC) formed by heme A3 and copper B (CU(B)). The BNC reduces molecular oxygen to 2 water molecules using 4 electrons from cytochrome c in the IMS and 4 protons from the mitochondrial matrix. This chain is Cytochrome c oxidase subunit 2 (COII), found in Schistocerca gregaria (Desert locust).